Consider the following 80-residue polypeptide: Acyl carrier protein (80 aa).

Residues 2-77 form the Carrier domain; it reads SEINQKVVDI…QVVEYLEKRL (76 aa). Serine 37 is subject to O-(pantetheine 4'-phosphoryl)serine.

The protein belongs to the acyl carrier protein (ACP) family. 4'-phosphopantetheine is transferred from CoA to a specific serine of apo-ACP by AcpS. This modification is essential for activity because fatty acids are bound in thioester linkage to the sulfhydryl of the prosthetic group.

The protein resides in the cytoplasm. Its pathway is lipid metabolism; fatty acid biosynthesis. Carrier of the growing fatty acid chain in fatty acid biosynthesis. The protein is Acyl carrier protein of Amoebophilus asiaticus (strain 5a2).